Reading from the N-terminus, the 214-residue chain is DELTA-actitoxin-Aeq1a (214 aa).

The first 19 residues, 1-19, serve as a signal peptide directing secretion; sequence MSRLIIVFIVVTMICSATA. Residues 20 to 35 constitute a propeptide that is removed on maturation; sequence LPSKKIIDEDEEDEKR. Residues 38 to 47 are plays an important role in the hemolytic activity; that stretch reads DVAGAVIDGA. The tract at residues 46–65 is N-terminal region; that stretch reads GASLSFDILKTVLEALGNVK. Positions 89, 122, 140, 142, 168, 172, and 173 each coordinate phosphocholine. The interval 140–155 is trp-rich region, which is important for the binding to lipid membrane; that stretch reads SVPYDYNWYSNWWNVR. Residues 179-181 carry the Cell attachment site, crucial for protein stability motif; sequence RGD.

The protein belongs to the actinoporin family. Sea anemone subfamily. As to quaternary structure, octamer or nonamer in membranes. Monomer in the soluble state.

The protein localises to the secreted. The protein resides in the nematocyst. It localises to the target cell membrane. Pore-forming protein that forms cations-selective hydrophilic pores of around 1 nm and causes cardiac stimulation and cytolysis. Pore formation is a multi-step process that involves specific recognition of membrane sphingomyelin (but neither cholesterol nor phosphatidylcholine) using aromatic rich region and adjacent phosphocholine (POC) binding site, firm binding to the membrane (mainly driven by hydrophobic interactions) accompanied by the transfer of the N-terminal region to the lipid-water interface and finally pore formation after oligomerization of monomers. Cytolytic effects include red blood cells hemolysis, platelet aggregation and lysis, cytotoxic and cytostatic effects on fibroblasts. Lethality in mammals has been ascribed to severe vasospasm of coronary vessels, cardiac arrhythmia, and inotropic effects. The chain is DELTA-actitoxin-Aeq1a from Actinia equina (Beadlet anemone).